Reading from the N-terminus, the 642-residue chain is LIM domain kinase 2 (642 aa).

LIM zinc-binding domains are found at residues 12–63 (CLGC…CHKD) and 72–124 (CHGC…CGKC). Residues 152-239 (LISMPAATDG…TLQLLIEHDP (88 aa)) enclose the PDZ domain. The interval 282 to 304 (RSLRRSNSISKSPGPSSPKEPLL) is disordered. Over residues 286 to 304 (RSNSISKSPGPSSPKEPLL) the composition is skewed to low complexity. The Protein kinase domain occupies 331 to 608 (LIHGEVLGKG…DSFEALSLYL (278 aa)). ATP is bound by residues 337-345 (LGKGFFGQA) and lysine 360. The active site involves aspartate 451. The residue at position 505 (threonine 505) is a Phosphothreonine.

The protein belongs to the protein kinase superfamily. TKL Ser/Thr protein kinase family. As to quaternary structure, binds ROCK1 and LKAP. Expressed predominantly in the lung, and faintly in the kidney, liver, brain, spleen, gizzard, and intestine.

Its subcellular location is the cytoplasm. The protein resides in the cytoskeleton. It localises to the spindle. It is found in the microtubule organizing center. The protein localises to the centrosome. It carries out the reaction L-seryl-[protein] + ATP = O-phospho-L-seryl-[protein] + ADP + H(+). The enzyme catalyses L-threonyl-[protein] + ATP = O-phospho-L-threonyl-[protein] + ADP + H(+). Serine/threonine-protein kinase that plays an essential role in the regulation of actin filament dynamics. Acts downstream of several Rho family GTPase signal transduction pathways. Involved in astral microtubule organization and mitotic spindle orientation during early stages of mitosis by mediating phosphorylation of TPPP. This is LIM domain kinase 2 (LIMK2) from Gallus gallus (Chicken).